Reading from the N-terminus, the 247-residue chain is Large ribosomal subunit protein uL3 (247 aa).

Disordered regions lie at residues 124–145 (RLGQ…PGSM) and 218–247 (VGQE…ASAE). Residues 222–241 (VKAEAKDTASTEKKQAETKN) show a composition bias toward basic and acidic residues.

The protein belongs to the universal ribosomal protein uL3 family. Part of the 50S ribosomal subunit. Forms a cluster with proteins L14 and L19.

Functionally, one of the primary rRNA binding proteins, it binds directly near the 3'-end of the 23S rRNA, where it nucleates assembly of the 50S subunit. The sequence is that of Large ribosomal subunit protein uL3 from Oenococcus oeni (strain ATCC BAA-331 / PSU-1).